The chain runs to 186 residues: Guanylate kinase (186 aa).

The region spanning 4–182 is the Guanylate kinase-like domain; it reads GKLIVLTGPS…TLQNLDKILF (179 aa). 11–18 lines the ATP pocket; sequence GPSGVGKG.

This sequence belongs to the guanylate kinase family.

Its subcellular location is the cytoplasm. It carries out the reaction GMP + ATP = GDP + ADP. Its function is as follows. Essential for recycling GMP and indirectly, cGMP. The sequence is that of Guanylate kinase from Trichodesmium erythraeum (strain IMS101).